The primary structure comprises 157 residues: Cyclic pyranopterin monophosphate synthase (157 aa).

Substrate is bound by residues 74–76 (MCH) and 110–111 (ME). The active site involves D125.

Belongs to the MoaC family. In terms of assembly, homohexamer; trimer of dimers.

The catalysed reaction is (8S)-3',8-cyclo-7,8-dihydroguanosine 5'-triphosphate = cyclic pyranopterin phosphate + diphosphate. It participates in cofactor biosynthesis; molybdopterin biosynthesis. Functionally, catalyzes the conversion of (8S)-3',8-cyclo-7,8-dihydroguanosine 5'-triphosphate to cyclic pyranopterin monophosphate (cPMP). The sequence is that of Cyclic pyranopterin monophosphate synthase from Peptoclostridium acidaminophilum (Eubacterium acidaminophilum).